The chain runs to 773 residues: Tyrosine kinase receptor Cad96Ca (773 aa).

A signal peptide spans 1-48 (MVYHHHNHESRIIHCRKQLTSWRRRSLLLTIIVVTATVVSLISQEAEA). Residues 49-315 (HNQNAPPILY…ITIFSLKSGT (267 aa)) lie on the Extracellular side of the membrane. In terms of domain architecture, Cadherin spans 58–172 (YVRERNWRIS…ENSSGYRPQT (115 aa)). N-linked (GlcNAc...) asparagine glycans are attached at residues Asn126, Asn164, and Asn180. A disordered region spans residues 196 to 302 (SIRNGLPNSR…TPSGGHHNNS (107 aa)). The span at 209-235 (WYPPVPQNNIFGPPPFGNNYPPPPPNI) shows a compositional bias: pro residues. Acidic residues predominate over residues 243 to 253 (SGEEEQPDEEV). Composition is skewed to polar residues over residues 254-283 (TPTTPVRISSTTPKSRTKLTPITANNSTRV) and 290-302 (ETTTPSGGHHNNS). N-linked (GlcNAc...) asparagine glycosylation is found at Asn278, Asn279, Asn300, and Asn301. A helical transmembrane segment spans residues 316–336 (IPIVVTVGGFFVAIAVLLAYL). The Cytoplasmic segment spans residues 337 to 773 (CRRRLCAISR…NIVSLSGEKL (437 aa)). Disordered regions lie at residues 352–373 (KEKEELAKKSNQSQLSSTLTDD) and 411–447 (TGVTNGGVSSPGVPSPGTGEPGSNLGPGCLTGGAGSS). Over residues 361 to 373 (SNQSQLSSTLTDD) the composition is skewed to polar residues. Low complexity predominate over residues 411–433 (TGVTNGGVSSPGVPSPGTGEPGS). The 280-residue stretch at 470–749 (LKFFNILGEG…MLDKLLHTEM (280 aa)) folds into the Protein kinase domain. Residues 476 to 484 (LGEGAFGQV) and Lys504 each bind ATP. Residue Asp610 is the Proton acceptor of the active site.

This sequence belongs to the protein kinase superfamily. Tyr protein kinase family. Fibroblast growth factor receptor subfamily.

Its subcellular location is the membrane. The catalysed reaction is L-tyrosyl-[protein] + ATP = O-phospho-L-tyrosyl-[protein] + ADP + H(+). The protein is Tyrosine kinase receptor Cad96Ca (Cad96Ca) of Drosophila melanogaster (Fruit fly).